The chain runs to 175 residues: Adenine phosphoribosyltransferase (175 aa).

The protein belongs to the purine/pyrimidine phosphoribosyltransferase family. In terms of assembly, homodimer.

Its subcellular location is the cytoplasm. It carries out the reaction AMP + diphosphate = 5-phospho-alpha-D-ribose 1-diphosphate + adenine. The protein operates within purine metabolism; AMP biosynthesis via salvage pathway; AMP from adenine: step 1/1. In terms of biological role, catalyzes a salvage reaction resulting in the formation of AMP, that is energically less costly than de novo synthesis. The sequence is that of Adenine phosphoribosyltransferase from Lactobacillus delbrueckii subsp. bulgaricus (strain ATCC 11842 / DSM 20081 / BCRC 10696 / JCM 1002 / NBRC 13953 / NCIMB 11778 / NCTC 12712 / WDCM 00102 / Lb 14).